The chain runs to 227 residues: Glutathione S-transferase U18 (227 aa).

The GST N-terminal domain maps to 4–83 (EDVKLIGSWA…YIDEAWNSSG (80 aa)). Glutathione is bound by residues 14–15 (SV), 40–41 (SK), 54–55 (KM), and 67–68 (ES). In terms of domain architecture, GST C-terminal spans 90 to 221 (HPYDRAIARF…TKLAEFARKL (132 aa)).

This sequence belongs to the GST superfamily. Tau family.

The protein resides in the cytoplasm. It is found in the cytosol. It catalyses the reaction RX + glutathione = an S-substituted glutathione + a halide anion + H(+). Its function is as follows. May be involved in the conjugation of reduced glutathione to a wide number of exogenous and endogenous hydrophobic electrophiles and have a detoxification role against certain herbicides. This Arabidopsis thaliana (Mouse-ear cress) protein is Glutathione S-transferase U18 (GSTU18).